The primary structure comprises 325 residues: uncharacterized protein (325 aa).

Tyrosine 59 acts as the Proton donor in catalysis. Histidine 117 serves as a coordination point for substrate.

It belongs to the aldo/keto reductase family.

The protein localises to the cytoplasm. Its subcellular location is the nucleus. This is an uncharacterized protein from Schizosaccharomyces pombe (strain 972 / ATCC 24843) (Fission yeast).